Consider the following 429-residue polypeptide: Glutamate-1-semialdehyde 2,1-aminomutase (429 aa).

Lys-265 carries the post-translational modification N6-(pyridoxal phosphate)lysine.

Belongs to the class-III pyridoxal-phosphate-dependent aminotransferase family. HemL subfamily. Homodimer. Pyridoxal 5'-phosphate serves as cofactor.

It is found in the cytoplasm. It catalyses the reaction (S)-4-amino-5-oxopentanoate = 5-aminolevulinate. It participates in porphyrin-containing compound metabolism; protoporphyrin-IX biosynthesis; 5-aminolevulinate from L-glutamyl-tRNA(Glu): step 2/2. This is Glutamate-1-semialdehyde 2,1-aminomutase from Azotobacter vinelandii (strain DJ / ATCC BAA-1303).